The sequence spans 1289 residues: Trafficking protein particle complex II-specific subunit 120 (1289 aa).

A compositionally biased stretch (polar residues) spans S354–K365. A disordered region spans residues S354–S374. 2 positions are modified to phosphoserine: S379 and S387.

This sequence belongs to the TRS120 family. In terms of assembly, part of the multisubunit TRAPP (transport protein particle) II complex composed of BET3, BET5, TRS20, TRS23, TRS31, TRS33, TRS65, TRS120 and TRS130. Interacts directly with TRS65.

It is found in the golgi apparatus. The protein localises to the cis-Golgi network. Functionally, specific subunit of the TRAPP II complex, a highly conserved vesicle tethering complex that functions in the late Golgi as a guanine nucleotide exchanger (GEF) for the Golgi YPT1 GTPase. TRS120 plays a role in the YPT GEF activity of TRAPP II in concert with the two other TRAPP II-specific subunits TRS65 and TRS130. This chain is Trafficking protein particle complex II-specific subunit 120 (TRS120), found in Saccharomyces cerevisiae (strain ATCC 204508 / S288c) (Baker's yeast).